The chain runs to 914 residues: DENN domain-containing protein 2C (914 aa).

Residues 46–98 (FGVRYNCHQESPPHKRPTGEERNGALPRNTDVKSRDQSEDEGEGGECRGSHPS) form a disordered region. Residues 56–68 (SPPHKRPTGEERN) are compositionally biased toward basic and acidic residues. Position 261 is a phosphoserine (Ser-261). Positions 411–446 (GKKRVKLQPYTGKEAPSSKGETSGNESDAEYLPKNR) are disordered. The region spanning 480–627 (ELFVVVSLQK…PFPAPGRTIT (148 aa)) is the uDENN domain. Residues 649 to 782 (RLEHVDFECL…LQAALVQILE (134 aa)) enclose the cDENN domain. The region spanning 784–874 (RDEVLAQEQQ…QDRELRQSGV (91 aa)) is the dDENN domain.

In terms of biological role, guanine nucleotide exchange factor (GEF) which may activate RAB9A and RAB9B. Promotes the exchange of GDP to GTP, converting inactive GDP-bound Rab proteins into their active GTP-bound form. In Mus musculus (Mouse), this protein is DENN domain-containing protein 2C (Dennd2c).